We begin with the raw amino-acid sequence, 216 residues long: ATP phosphoribosyltransferase (216 aa).

Belongs to the ATP phosphoribosyltransferase family. Short subfamily. In terms of assembly, heteromultimer composed of HisG and HisZ subunits.

The protein resides in the cytoplasm. The catalysed reaction is 1-(5-phospho-beta-D-ribosyl)-ATP + diphosphate = 5-phospho-alpha-D-ribose 1-diphosphate + ATP. The protein operates within amino-acid biosynthesis; L-histidine biosynthesis; L-histidine from 5-phospho-alpha-D-ribose 1-diphosphate: step 1/9. In terms of biological role, catalyzes the condensation of ATP and 5-phosphoribose 1-diphosphate to form N'-(5'-phosphoribosyl)-ATP (PR-ATP). Has a crucial role in the pathway because the rate of histidine biosynthesis seems to be controlled primarily by regulation of HisG enzymatic activity. The chain is ATP phosphoribosyltransferase from Lachnospira eligens (strain ATCC 27750 / DSM 3376 / VPI C15-48 / C15-B4) (Eubacterium eligens).